The chain runs to 138 residues: ATP synthase epsilon chain, chloroplastic (138 aa).

The protein belongs to the ATPase epsilon chain family. F-type ATPases have 2 components, CF(1) - the catalytic core - and CF(0) - the membrane proton channel. CF(1) has five subunits: alpha(3), beta(3), gamma(1), delta(1), epsilon(1). CF(0) has three main subunits: a, b and c.

The protein localises to the plastid. It localises to the chloroplast thylakoid membrane. Its function is as follows. Produces ATP from ADP in the presence of a proton gradient across the membrane. In Anthoceros angustus (Hornwort), this protein is ATP synthase epsilon chain, chloroplastic.